Reading from the N-terminus, the 125-residue chain is Histone H2A (125 aa).

Residues 1-18 are compositionally biased toward basic residues; that stretch reads MSGRGKGGKAKAKAKSRS. The interval 1-21 is disordered; the sequence is MSGRGKGGKAKAKAKSRSSRA. Ser2 is modified (N-acetylserine). Residue Gln104 is modified to N5-methylglutamine.

The protein belongs to the histone H2A family. In terms of assembly, the nucleosome is a histone octamer containing two molecules each of H2A, H2B, H3 and H4 assembled in one H3-H4 heterotetramer and two H2A-H2B heterodimers. The octamer wraps approximately 147 bp of DNA.

It localises to the nucleus. The protein resides in the chromosome. Its function is as follows. Core component of nucleosome. Nucleosomes wrap and compact DNA into chromatin, limiting DNA accessibility to the cellular machineries which require DNA as a template. Histones thereby play a central role in transcription regulation, DNA repair, DNA replication and chromosomal stability. DNA accessibility is regulated via a complex set of post-translational modifications of histones, also called histone code, and nucleosome remodeling. The sequence is that of Histone H2A from Mytilus californianus (California mussel).